The sequence spans 613 residues: Glucose-6-phosphate isomerase 1, chloroplastic (613 aa).

Residues 1–14 show a composition bias toward low complexity; that stretch reads MASLSGLYSSSPSL. Positions 1-21 are disordered; that stretch reads MASLSGLYSSSPSLKPAKNHS. The N-terminal 48 residues, 1-48, are a transit peptide targeting the chloroplast; the sequence is MASLSGLYSSSPSLKPAKNHSFKALPAQSRDSFSFPHTSKPTNLPLTL. The active-site Proton donor is the Glu392. Catalysis depends on residues His421 and Lys526. Ser595 carries the phosphoserine modification.

The protein belongs to the GPI family.

The protein resides in the plastid. The protein localises to the chloroplast stroma. It catalyses the reaction alpha-D-glucose 6-phosphate = beta-D-fructose 6-phosphate. It functions in the pathway carbohydrate degradation; glycolysis; D-glyceraldehyde 3-phosphate and glycerone phosphate from D-glucose: step 2/4. The protein operates within carbohydrate biosynthesis; gluconeogenesis. Its activity is regulated as follows. Inhibited by glycerol-3-P (G3P). In terms of biological role, promotes the synthesis of starch in leaves. This is Glucose-6-phosphate isomerase 1, chloroplastic (PGI1) from Arabidopsis thaliana (Mouse-ear cress).